Consider the following 130-residue polypeptide: Small ribosomal subunit protein uS8 (130 aa).

It belongs to the universal ribosomal protein uS8 family. In terms of assembly, part of the 30S ribosomal subunit. Contacts proteins S5 and S12.

Its function is as follows. One of the primary rRNA binding proteins, it binds directly to 16S rRNA central domain where it helps coordinate assembly of the platform of the 30S subunit. The chain is Small ribosomal subunit protein uS8 from Aster yellows witches'-broom phytoplasma (strain AYWB).